The sequence spans 146 residues: 3-hydroxyacyl-[acyl-carrier-protein] dehydratase FabZ (146 aa).

H49 is an active-site residue.

Belongs to the thioester dehydratase family. FabZ subfamily.

Its subcellular location is the cytoplasm. It carries out the reaction a (3R)-hydroxyacyl-[ACP] = a (2E)-enoyl-[ACP] + H2O. Its function is as follows. Involved in unsaturated fatty acids biosynthesis. Catalyzes the dehydration of short chain beta-hydroxyacyl-ACPs and long chain saturated and unsaturated beta-hydroxyacyl-ACPs. The protein is 3-hydroxyacyl-[acyl-carrier-protein] dehydratase FabZ of Pseudomonas savastanoi pv. phaseolicola (strain 1448A / Race 6) (Pseudomonas syringae pv. phaseolicola (strain 1448A / Race 6)).